A 339-amino-acid polypeptide reads, in one-letter code: Ribosomal RNA small subunit methyltransferase C (339 aa).

This sequence belongs to the methyltransferase superfamily. RsmC family. In terms of assembly, monomer.

It localises to the cytoplasm. It catalyses the reaction guanosine(1207) in 16S rRNA + S-adenosyl-L-methionine = N(2)-methylguanosine(1207) in 16S rRNA + S-adenosyl-L-homocysteine + H(+). In terms of biological role, specifically methylates the guanine in position 1207 of 16S rRNA in the 30S particle. The polypeptide is Ribosomal RNA small subunit methyltransferase C (Aliivibrio salmonicida (strain LFI1238) (Vibrio salmonicida (strain LFI1238))).